The primary structure comprises 445 residues: Proline--tRNA ligase (445 aa).

It belongs to the class-II aminoacyl-tRNA synthetase family. ProS type 2 subfamily. In terms of assembly, homodimer.

It localises to the cytoplasm. The enzyme catalyses tRNA(Pro) + L-proline + ATP = L-prolyl-tRNA(Pro) + AMP + diphosphate. Functionally, catalyzes the attachment of proline to tRNA(Pro) in a two-step reaction: proline is first activated by ATP to form Pro-AMP and then transferred to the acceptor end of tRNA(Pro). This chain is Proline--tRNA ligase, found in Cereibacter sphaeroides (strain ATCC 17029 / ATH 2.4.9) (Rhodobacter sphaeroides).